The sequence spans 230 residues: Sugar fermentation stimulation protein homolog (230 aa).

Belongs to the SfsA family.

This Clostridium botulinum (strain Loch Maree / Type A3) protein is Sugar fermentation stimulation protein homolog.